The following is a 396-amino-acid chain: Phosphopentomutase (396 aa).

Residues aspartate 14, aspartate 286, histidine 291, aspartate 327, histidine 328, and histidine 339 each coordinate Mn(2+).

The protein belongs to the phosphopentomutase family. Mn(2+) is required as a cofactor.

It is found in the cytoplasm. It carries out the reaction 2-deoxy-alpha-D-ribose 1-phosphate = 2-deoxy-D-ribose 5-phosphate. The enzyme catalyses alpha-D-ribose 1-phosphate = D-ribose 5-phosphate. It participates in carbohydrate degradation; 2-deoxy-D-ribose 1-phosphate degradation; D-glyceraldehyde 3-phosphate and acetaldehyde from 2-deoxy-alpha-D-ribose 1-phosphate: step 1/2. Its function is as follows. Isomerase that catalyzes the conversion of deoxy-ribose 1-phosphate (dRib-1-P) and ribose 1-phosphate (Rib-1-P) to deoxy-ribose 5-phosphate (dRib-5-P) and ribose 5-phosphate (Rib-5-P), respectively. In Staphylococcus epidermidis (strain ATCC 35984 / DSM 28319 / BCRC 17069 / CCUG 31568 / BM 3577 / RP62A), this protein is Phosphopentomutase.